The sequence spans 330 residues: ADP-L-glycero-D-manno-heptose-6-epimerase (330 aa).

NADP(+) is bound by residues 11–12 (FI), 32–33 (DN), lysine 39, lysine 54, 75–79 (EGACS), and asparagine 92. Tyrosine 139 acts as the Proton acceptor in catalysis. NADP(+) is bound at residue lysine 143. Asparagine 168 is a binding site for substrate. Residues valine 169 and lysine 177 each coordinate NADP(+). The Proton acceptor role is filled by lysine 177. Residues arginine 179, histidine 186, 200–203 (FGEY), arginine 213, and tyrosine 292 contribute to the substrate site.

It belongs to the NAD(P)-dependent epimerase/dehydratase family. HldD subfamily. In terms of assembly, homopentamer. The cofactor is NADP(+).

It catalyses the reaction ADP-D-glycero-beta-D-manno-heptose = ADP-L-glycero-beta-D-manno-heptose. It functions in the pathway nucleotide-sugar biosynthesis; ADP-L-glycero-beta-D-manno-heptose biosynthesis; ADP-L-glycero-beta-D-manno-heptose from D-glycero-beta-D-manno-heptose 7-phosphate: step 4/4. Its function is as follows. Catalyzes the interconversion between ADP-D-glycero-beta-D-manno-heptose and ADP-L-glycero-beta-D-manno-heptose via an epimerization at carbon 6 of the heptose. In Burkholderia pseudomallei (strain K96243), this protein is ADP-L-glycero-D-manno-heptose-6-epimerase.